The primary structure comprises 398 residues: 1-deoxy-D-xylulose 5-phosphate reductoisomerase (398 aa).

Residues T10, G11, S12, I13, G36, R37, N38, and N124 each contribute to the NADPH site. K125 is a 1-deoxy-D-xylulose 5-phosphate binding site. Residue E126 coordinates NADPH. D150 provides a ligand contact to Mn(2+). S151, E152, S186, and H209 together coordinate 1-deoxy-D-xylulose 5-phosphate. Mn(2+) is bound at residue E152. G215 serves as a coordination point for NADPH. The 1-deoxy-D-xylulose 5-phosphate site is built by S222, N227, K228, and E231. E231 contacts Mn(2+).

The protein belongs to the DXR family. Homodimer. Mg(2+) is required as a cofactor. The cofactor is Mn(2+).

It carries out the reaction 2-C-methyl-D-erythritol 4-phosphate + NADP(+) = 1-deoxy-D-xylulose 5-phosphate + NADPH + H(+). It functions in the pathway isoprenoid biosynthesis; isopentenyl diphosphate biosynthesis via DXP pathway; isopentenyl diphosphate from 1-deoxy-D-xylulose 5-phosphate: step 1/6. Catalyzes the NADPH-dependent rearrangement and reduction of 1-deoxy-D-xylulose-5-phosphate (DXP) to 2-C-methyl-D-erythritol 4-phosphate (MEP). The chain is 1-deoxy-D-xylulose 5-phosphate reductoisomerase from Yersinia pseudotuberculosis serotype O:1b (strain IP 31758).